The primary structure comprises 86 residues: Small ribosomal subunit protein bS20 (86 aa).

Residues 1–27 (MANIKSAKKRAVQSEKRRQHNASRRSM) are compositionally biased toward basic residues. The segment at 1 to 28 (MANIKSAKKRAVQSEKRRQHNASRRSMM) is disordered.

This sequence belongs to the bacterial ribosomal protein bS20 family.

Binds directly to 16S ribosomal RNA. This is Small ribosomal subunit protein bS20 from Proteus mirabilis (strain HI4320).